A 344-amino-acid polypeptide reads, in one-letter code: L-rhamnose-proton symporter (344 aa).

Helical transmembrane passes span 4–24, 38–58, 68–88, 101–121, 137–157, 175–195, 214–234, 259–279, 290–310, and 323–343; these read AITM…CFYA, WSVG…ALLL, FSLS…IGNI, MGIG…TPII, TLLG…AGQL, LVLA…MNAA, LPSY…FCFI, VLLS…YAWG, ISWM…GLVL, and VLSL…IGMA.

The protein belongs to the L-rhamnose transporter (TC 2.A.7.6) family.

It is found in the cell inner membrane. It carries out the reaction L-rhamnopyranose(in) + H(+)(in) = L-rhamnopyranose(out) + H(+)(out). Functionally, uptake of L-rhamnose across the cytoplasmic membrane with the concomitant transport of protons into the cell (symport system). The chain is L-rhamnose-proton symporter from Escherichia coli O127:H6 (strain E2348/69 / EPEC).